The following is an 853-amino-acid chain: MRVKEKYQHLWRWGWKWGIMLLGILMICSATENLWVTVYYGVPVWKEATTTLFCASDAKAYDTEVHNVCATHACVPTDPNPQEVILVNVTENFDMWKNDMVEQMHEDIISLWDQSLKPCVKLTPLCVNLKCTDLKNDTNTNSSNGRMIMEKGEIKNCSFNISTSIRNKVQKEYAFFYKLDIRPIDNTTYRLISCNTSVITQACPKVSFEPIPIHYCAPAGFAILKCNDKTFNGTGPCTNVSTVQCTHGIRPVVSTQLLLNGSLAEEEGVIRSANFTDNAKTIIVQLNTSVEINCTRPNNNTRKSIRIQRGPGRAFVTIGKIGNMRQAHCNISRAKWMSTLKQIASKLREQFGNNKTVIFKQSSGGDPEIVTHSFNCGGEFFYCNSTQLFNSTWFNSTWSTEGSNNTEGSDTITLPCRIKQFINMWQEVGKAMYAPPISGQIRCSSNITGLLLTRDGGKNTNESEVFRPGGGDMRDNWRSELYKYKVVKIETLGVAPTKAKRRVVQREKRAVGIGALFLGFLGAAGSTMGAASMTLTVQARQLLSGIVQQQNNLLRAIEAQQHLLQLTVWGIKQLQARILAVERYLKDQQLLGIWGCSGKLICTTAVPWNASWSNKSLEQFWNNMTWMEWDREINNYTSLIHSLIDESQNQQEKNEQELLELDKWASLWNWFNITNWLWYIKIFIMIVGGLVGLRIVFAVLSIVNRVRQGYSPLSFQTHLPNRGGPDRPEGIEEEGGERDRDRSVRLVNGSLALIWDDLRSLCLFSYHRLRDLLLIVTRIVELLGRRGWEALKYWWNLLQYWSQELKNSAVSLLNATAIAVAEGTDRVIEVVQGAYRAIRHIPRRIRQGLERIL.

The N-terminal stretch at 1 to 32 is a signal peptide; the sequence is MRVKEKYQHLWRWGWKWGIMLLGILMICSATE. The Extracellular portion of the chain corresponds to 33–682; that stretch reads NLWVTVYYGV…ITNWLWYIKI (650 aa). A disulfide bond links cysteine 54 and cysteine 74. Residues asparagine 88, asparagine 136, asparagine 141, asparagine 156, asparagine 160, asparagine 186, asparagine 195, asparagine 232, asparagine 239, asparagine 260, asparagine 274, asparagine 287, asparagine 293, asparagine 299, asparagine 330, and asparagine 354 are each glycosylated (N-linked (GlcNAc...) asparagine; by host). 5 cysteine pairs are disulfide-bonded: cysteine 119–cysteine 203, cysteine 126–cysteine 194, cysteine 131–cysteine 157, cysteine 216–cysteine 245, and cysteine 226–cysteine 237. Residues 131 to 156 form a V1 region; that stretch reads CTDLKNDTNTNSSNGRMIMEKGEIKN. A V2 region spans residues 157-194; that stretch reads CSFNISTSIRNKVQKEYAFFYKLDIRPIDNTTYRLISC. The segment at 294-328 is V3; sequence CTRPNNNTRKSIRIQRGPGRAFVTIGKIGNMRQAH. Cysteine 294 and cysteine 329 are disulfide-bonded. A CD4-binding loop region spans residues 362 to 372; the sequence is SSGGDPEIVTH. Cystine bridges form between cysteine 376–cysteine 443 and cysteine 383–cysteine 416. The V4 stretch occupies residues 383–416; the sequence is CNSTQLFNSTWFNSTWSTEGSNNTEGSDTITLPC. N-linked (GlcNAc...) asparagine; by host glycosylation is found at asparagine 384, asparagine 390, asparagine 395, asparagine 404, asparagine 446, and asparagine 461. V5 stretches follow at residues 459–469 and 461–469; these read NTNESEVFRPG and NESEVFRPG. Positions 510–530 are fusion peptide; that stretch reads AVGIGALFLGFLGAAGSTMGA. Positions 572-590 are immunosuppression; the sequence is KQLQARILAVERYLKDQQL. Cysteines 596 and 602 form a disulfide. N-linked (GlcNAc...) asparagine; by host glycosylation is found at asparagine 609, asparagine 614, asparagine 623, asparagine 635, and asparagine 672. Positions 631 to 665 form a coiled coil; that stretch reads REINNYTSLIHSLIDESQNQQEKNEQELLELDKWA. The MPER; binding to GalCer stretch occupies residues 660-681; it reads ELDKWASLWNWFNITNWLWYIK. Residues 683-703 traverse the membrane as a helical segment; it reads FIMIVGGLVGLRIVFAVLSIV. At 704 to 853 the chain is on the cytoplasmic side; that stretch reads NRVRQGYSPL…RIRQGLERIL (150 aa). Positions 710–713 match the YXXL motif; contains endocytosis signal motif; it reads YSPL. The tract at residues 717–741 is disordered; that stretch reads THLPNRGGPDRPEGIEEEGGERDRD. Cysteine 762 carries the S-palmitoyl cysteine; by host lipid modification.

Belongs to the HIV-1 env protein family. As to quaternary structure, the mature envelope protein (Env) consists of a homotrimer of non-covalently associated gp120-gp41 heterodimers. The resulting complex protrudes from the virus surface as a spike. There seems to be as few as 10 spikes on the average virion. Interacts with host CD4, CCR5 and CXCR4. Gp120 also interacts with the C-type lectins CD209/DC-SIGN and CLEC4M/DC-SIGNR (collectively referred to as DC-SIGN(R)). Gp120 and gp41 interact with GalCer. Gp120 interacts with host ITGA4/ITGB7 complex; on CD4+ T-cells, this interaction results in rapid activation of integrin ITGAL/LFA-1, which facilitates efficient cell-to-cell spreading of HIV-1. Gp120 interacts with cell-associated heparan sulfate; this interaction increases virus infectivity on permissive cells and may be involved in infection of CD4- cells. In terms of assembly, the mature envelope protein (Env) consists of a homotrimer of non-covalently associated gp120-gp41 heterodimers. The resulting complex protrudes from the virus surface as a spike. There seems to be as few as 10 spikes on the average virion. Highly glycosylated by host. The high number of glycan on the protein is reffered to as 'glycan shield' because it contributes to hide protein sequence from adaptive immune system. In terms of processing, palmitoylation of the transmembrane protein and of Env polyprotein (prior to its proteolytic cleavage) is essential for their association with host cell membrane lipid rafts. Palmitoylation is therefore required for envelope trafficking to classical lipid rafts, but not for viral replication. Post-translationally, specific enzymatic cleavages in vivo yield mature proteins. Envelope glycoproteins are synthesized as an inactive precursor that is heavily N-glycosylated and processed likely by host cell furin in the Golgi to yield the mature SU and TM proteins. The cleavage site between SU and TM requires the minimal sequence [KR]-X-[KR]-R. About 2 of the 9 disulfide bonds of gp41 are reduced by P4HB/PDI, following binding to CD4 receptor.

It is found in the virion membrane. Its subcellular location is the host cell membrane. The protein resides in the host endosome membrane. Functionally, oligomerizes in the host endoplasmic reticulum into predominantly trimers. In a second time, gp160 transits in the host Golgi, where glycosylation is completed. The precursor is then proteolytically cleaved in the trans-Golgi and thereby activated by cellular furin or furin-like proteases to produce gp120 and gp41. Its function is as follows. Attaches the virus to the host lymphoid cell by binding to the primary receptor CD4. This interaction induces a structural rearrangement creating a high affinity binding site for a chemokine coreceptor like CXCR4 and/or CCR5. Acts as a ligand for CD209/DC-SIGN and CLEC4M/DC-SIGNR, which are respectively found on dendritic cells (DCs), and on endothelial cells of liver sinusoids and lymph node sinuses. These interactions allow capture of viral particles at mucosal surfaces by these cells and subsequent transmission to permissive cells. HIV subverts the migration properties of dendritic cells to gain access to CD4+ T-cells in lymph nodes. Virus transmission to permissive T-cells occurs either in trans (without DCs infection, through viral capture and transmission), or in cis (following DCs productive infection, through the usual CD4-gp120 interaction), thereby inducing a robust infection. In trans infection, bound virions remain infectious over days and it is proposed that they are not degraded, but protected in non-lysosomal acidic organelles within the DCs close to the cell membrane thus contributing to the viral infectious potential during DCs' migration from the periphery to the lymphoid tissues. On arrival at lymphoid tissues, intact virions recycle back to DCs' cell surface allowing virus transmission to CD4+ T-cells. Acts as a class I viral fusion protein. Under the current model, the protein has at least 3 conformational states: pre-fusion native state, pre-hairpin intermediate state, and post-fusion hairpin state. During fusion of viral and target intracellular membranes, the coiled coil regions (heptad repeats) assume a trimer-of-hairpins structure, positioning the fusion peptide in close proximity to the C-terminal region of the ectodomain. The formation of this structure appears to drive apposition and subsequent fusion of viral and target cell membranes. Complete fusion occurs in host cell endosomes and is dynamin-dependent, however some lipid transfer might occur at the plasma membrane. The virus undergoes clathrin-dependent internalization long before endosomal fusion, thus minimizing the surface exposure of conserved viral epitopes during fusion and reducing the efficacy of inhibitors targeting these epitopes. Membranes fusion leads to delivery of the nucleocapsid into the cytoplasm. The protein is Envelope glycoprotein gp160 of Human immunodeficiency virus type 1 group M subtype B (isolate MFA) (HIV-1).